The sequence spans 287 residues: MSTKGQIIKGKPVADKISEELIKEVDLLVKEGINPKLTIVRVGARSDDLSYERGALKRCQNIGITTEVLELAEDITQEEYIDVLKRVNDDKNVNGILCFRPLPKHLNEEVIKYVIAPEKDVDCFSPINSAKVMEGDKSGFPPCTPTAVVEILKHYNVDLKGSKVTVLGRSMVVGKPVSMLLLSEHATVTICHSKTKNLSGVAAEADVLIAAIGRAKMVDESFVKDGAVVIDVGINVDEEGNLCGDVDTNAVLDKVSMITPVPAGVGSVTTSILAKHVVKACKLQNNK.

Residues Gly168 to Ser170, Ser193, and Ile234 contribute to the NADP(+) site.

The protein belongs to the tetrahydrofolate dehydrogenase/cyclohydrolase family. Homodimer.

The catalysed reaction is (6R)-5,10-methylene-5,6,7,8-tetrahydrofolate + NADP(+) = (6R)-5,10-methenyltetrahydrofolate + NADPH. The enzyme catalyses (6R)-5,10-methenyltetrahydrofolate + H2O = (6R)-10-formyltetrahydrofolate + H(+). It participates in one-carbon metabolism; tetrahydrofolate interconversion. In terms of biological role, catalyzes the oxidation of 5,10-methylenetetrahydrofolate to 5,10-methenyltetrahydrofolate and then the hydrolysis of 5,10-methenyltetrahydrofolate to 10-formyltetrahydrofolate. In Clostridioides difficile (strain 630) (Peptoclostridium difficile), this protein is Bifunctional protein FolD.